Consider the following 169-residue polypeptide: U3 small nucleolar ribonucleoprotein protein imp3 (169 aa).

The 58-residue stretch at 109–166 folds into the S4 RNA-binding domain; the sequence is RRLPVVMCRLKMCETVSTSVKYVEHGHVRVGPEVITDPAFFVTRNMEDFVTWVDSSKI.

It belongs to the universal ribosomal protein uS4 family. Component of a heterotrimeric complex containing imp3, imp4 and mpp10.

The protein resides in the nucleus. It is found in the nucleolus. Component of the U3 small nucleolar ribonucleoprotein. Required for the early cleavages at sites A0, A1 and A2 during 18S ribosomal pre-RNA processing. The sequence is that of U3 small nucleolar ribonucleoprotein protein imp3 (RBP) from Pneumocystis carinii.